Here is a 279-residue protein sequence, read N- to C-terminus: Ankyrin repeat domain-containing protein 7 (279 aa).

A compositionally biased stretch (basic residues) spans 1 to 11 (MKKFFPFRGKR). Residues 1-25 (MKKFFPFRGKRKTDDSHSHSSEVPI) form a disordered region. ANK repeat units follow at residues 80–109 (RSRT…KINV), 113–142 (ENRT…DPNL), 146–175 (YSNT…NLEA), 179–208 (DGHT…DVNA), and 212–241 (NHRT…DLAH).

The protein is Ankyrin repeat domain-containing protein 7 (Ankrd7) of Mus musculus (Mouse).